Consider the following 550-residue polypeptide: Chaperonin GroEL (550 aa).

ATP contacts are provided by residues Thr-30–Pro-33, Lys-51, Asp-87–Thr-91, Gly-415, and Asp-496. Residues Glu-528–Met-550 form a disordered region. Residues Gly-538–Met-550 are compositionally biased toward gly residues.

It belongs to the chaperonin (HSP60) family. As to quaternary structure, forms a cylinder of 14 subunits composed of two heptameric rings stacked back-to-back. Interacts with the co-chaperonin GroES.

The protein resides in the cytoplasm. The enzyme catalyses ATP + H2O + a folded polypeptide = ADP + phosphate + an unfolded polypeptide.. Its function is as follows. Together with its co-chaperonin GroES, plays an essential role in assisting protein folding. The GroEL-GroES system forms a nano-cage that allows encapsulation of the non-native substrate proteins and provides a physical environment optimized to promote and accelerate protein folding. The polypeptide is Chaperonin GroEL (Chlorobium phaeobacteroides (strain BS1)).